Reading from the N-terminus, the 95-residue chain is Gas vesicle protein S (95 aa).

Belongs to the gas vesicle GvpA family.

It localises to the gas vesicle. In terms of biological role, probably a minor component of the gas vesicle. It is not clear what function gas vesicles perform in soil bacteria. Functionally, when a minimal gvp locus (gvpA2-gvpR-gvpN-gvpF-gvpG-gvpL-gvpS-gvpK-gvpJ-gvpT-gvpU, called pNL29) is expressed in E.coli gas vesicles are made. This chain is Gas vesicle protein S, found in Priestia megaterium (Bacillus megaterium).